Consider the following 686-residue polypeptide: Catalase-2 (686 aa).

Positions 1–27 (MSDDQNKRVNEHSKDEQLEQYRTDNSG) are enriched in basic and acidic residues. Positions 1 to 43 (MSDDQNKRVNEHSKDEQLEQYRTDNSGKKMTTNQGLRVSEDEH) are disordered. Catalysis depends on residues histidine 78 and asparagine 151. Tyrosine 365 is a heme binding site.

The protein belongs to the catalase family. HPII subfamily. It depends on heme as a cofactor.

It carries out the reaction 2 H2O2 = O2 + 2 H2O. Functionally, decomposes hydrogen peroxide into water and oxygen; serves to protect cells from the toxic effects of hydrogen peroxide. Involved in sporulation. The chain is Catalase-2 (katE) from Bacillus subtilis (strain 168).